Consider the following 664-residue polypeptide: DNA mismatch repair protein MutL (664 aa).

Residues 382–447 (RKAGQEQQLQ…YGEPAPSKQQ (66 aa)) are disordered. A compositionally biased stretch (polar residues) spans 427-436 (RHTTSSNQSE).

The protein belongs to the DNA mismatch repair MutL/HexB family.

In terms of biological role, this protein is involved in the repair of mismatches in DNA. It is required for dam-dependent methyl-directed DNA mismatch repair. May act as a 'molecular matchmaker', a protein that promotes the formation of a stable complex between two or more DNA-binding proteins in an ATP-dependent manner without itself being part of a final effector complex. The chain is DNA mismatch repair protein MutL from Vibrio vulnificus (strain CMCP6).